Consider the following 380-residue polypeptide: 3-dehydroquinate synthase (380 aa).

It belongs to the archaeal-type DHQ synthase family.

The catalysed reaction is 2-amino-2,3,7-trideoxy-D-lyxo-hept-6-ulosonate + NAD(+) + H2O = 3-dehydroquinate + NH4(+) + NADH + H(+). Functionally, catalyzes the oxidative deamination and cyclization of 2-amino-3,7-dideoxy-D-threo-hept-6-ulosonic acid (ADH) to yield 3-dehydroquinate (DHQ), which is fed into the canonical shikimic pathway of aromatic amino acid biosynthesis. The sequence is that of 3-dehydroquinate synthase from Methanosarcina acetivorans (strain ATCC 35395 / DSM 2834 / JCM 12185 / C2A).